The chain runs to 314 residues: Olfactory receptor 5G9 (314 aa).

At Met-1–Val-25 the chain is on the extracellular side. Residue Asn-5 is glycosylated (N-linked (GlcNAc...) asparagine). A helical transmembrane segment spans residues Phe-26 to Ile-46. Over Ile-47 to Arg-54 the chain is Cytoplasmic. The helical transmembrane segment at Leu-55–Ser-75 threads the bilayer. Residues Val-76 to Leu-99 lie on the Extracellular side of the membrane. Cysteines 97 and 189 form a disulfide. The helical transmembrane segment at Gln-100 to Tyr-120 threads the bilayer. At Asp-121–Ser-133 the chain is on the cytoplasmic side. A helical transmembrane segment spans residues Val-134–Phe-154. Residues Asn-155–Lys-196 are Extracellular-facing. A helical transmembrane segment spans residues Leu-197–Ser-217. The Cytoplasmic portion of the chain corresponds to Tyr-218–Ala-237. A helical transmembrane segment spans residues Phe-238–Ile-258. Topologically, residues Tyr-259 to Asn-271 are extracellular. A helical membrane pass occupies residues Lys-272–Leu-292. Residues Arg-293–Asn-314 are Cytoplasmic-facing.

Belongs to the G-protein coupled receptor 1 family.

The protein resides in the cell membrane. Its function is as follows. Potential odorant receptor. This is Olfactory receptor 5G9 from Mus musculus (Mouse).